The following is a 417-amino-acid chain: UDP-N-acetylglucosamine 1-carboxyvinyltransferase (417 aa).

22 to 23 (KN) provides a ligand contact to phosphoenolpyruvate. R92 lines the UDP-N-acetyl-alpha-D-glucosamine pocket. C116 (proton donor) is an active-site residue. C116 bears the 2-(S-cysteinyl)pyruvic acid O-phosphothioketal mark. Positions 304 and 326 each coordinate UDP-N-acetyl-alpha-D-glucosamine.

Belongs to the EPSP synthase family. MurA subfamily.

The protein resides in the cytoplasm. It catalyses the reaction phosphoenolpyruvate + UDP-N-acetyl-alpha-D-glucosamine = UDP-N-acetyl-3-O-(1-carboxyvinyl)-alpha-D-glucosamine + phosphate. Its pathway is cell wall biogenesis; peptidoglycan biosynthesis. Its function is as follows. Cell wall formation. Adds enolpyruvyl to UDP-N-acetylglucosamine. This chain is UDP-N-acetylglucosamine 1-carboxyvinyltransferase, found in Geotalea daltonii (strain DSM 22248 / JCM 15807 / FRC-32) (Geobacter daltonii).